The chain runs to 553 residues: Retrotransposon Gag-like protein 3 (553 aa).

Residues 2–43 adopt a coiled-coil conformation; it reads VEDLAASYVTLKLENEILQAQVKRLMEENAALQAQIPELQKS. Disordered stretches follow at residues 38-274 and 474-514; these read PELQ…PLDP and SGGV…EAER. Over residues 45–57 the composition is skewed to basic and acidic residues; sequence AVKEHEPLRKPSE. Positions 58–73 are enriched in low complexity; that stretch reads AQEPPESPEFPAARES. Basic and acidic residues predominate over residues 87 to 113; it reads EPTKIREPREPSAISELREPPEIKEPQ. The span at 118 to 127 shows a compositional bias: polar residues; the sequence is TNESGESSAI. A compositionally biased stretch (basic and acidic residues) spans 132–147; it reads GSPEIKEPHLPPKSKE. Positions 239–250 are enriched in polar residues; it reads QTVPEYQETSSQ. Over residues 474–483 the composition is skewed to low complexity; sequence SGGVDSSSSS. Polar residues predominate over residues 495–507; the sequence is TENQPVQATSNRP. Residues 523–537 form a CCHC-type zinc finger; sequence CLYCGHPGHFARDCP.

In terms of tissue distribution, expressed in embryonic myogenic progenitor cells, not expressed in adult and aged satellite cells.

It localises to the nucleus. Functionally, may function as a transcriptional regulator. Plays a role in postnatal myogenesis, may be involved in the regulation of satellite cells self-renewal. The polypeptide is Retrotransposon Gag-like protein 3 (Mus musculus (Mouse)).